A 414-amino-acid chain; its full sequence is Enolase (414 aa).

(2R)-2-phosphoglycerate is bound at residue Gln162. Catalysis depends on Glu204, which acts as the Proton donor. Residues Asp239, Glu280, and Asp307 each coordinate Mg(2+). (2R)-2-phosphoglycerate-binding residues include Lys332, Arg361, Ser362, and Lys383. The active-site Proton acceptor is the Lys332.

This sequence belongs to the enolase family. Mg(2+) is required as a cofactor.

The protein localises to the cytoplasm. Its subcellular location is the secreted. The protein resides in the cell surface. The enzyme catalyses (2R)-2-phosphoglycerate = phosphoenolpyruvate + H2O. The protein operates within carbohydrate degradation; glycolysis; pyruvate from D-glyceraldehyde 3-phosphate: step 4/5. Functionally, catalyzes the reversible conversion of 2-phosphoglycerate (2-PG) into phosphoenolpyruvate (PEP). It is essential for the degradation of carbohydrates via glycolysis. The polypeptide is Enolase (Campylobacter jejuni subsp. doylei (strain ATCC BAA-1458 / RM4099 / 269.97)).